The primary structure comprises 421 residues: Gamma-glutamyl phosphate reductase (421 aa).

Belongs to the gamma-glutamyl phosphate reductase family.

Its subcellular location is the cytoplasm. It catalyses the reaction L-glutamate 5-semialdehyde + phosphate + NADP(+) = L-glutamyl 5-phosphate + NADPH + H(+). It participates in amino-acid biosynthesis; L-proline biosynthesis; L-glutamate 5-semialdehyde from L-glutamate: step 2/2. Its function is as follows. Catalyzes the NADPH-dependent reduction of L-glutamate 5-phosphate into L-glutamate 5-semialdehyde and phosphate. The product spontaneously undergoes cyclization to form 1-pyrroline-5-carboxylate. This chain is Gamma-glutamyl phosphate reductase, found in Pseudomonas aeruginosa (strain UCBPP-PA14).